Reading from the N-terminus, the 301-residue chain is Sulfate adenylyltransferase subunit 2 (301 aa).

Belongs to the PAPS reductase family. CysD subfamily. As to quaternary structure, heterodimer composed of CysD, the smaller subunit, and CysN.

The enzyme catalyses sulfate + ATP + H(+) = adenosine 5'-phosphosulfate + diphosphate. Its pathway is sulfur metabolism; hydrogen sulfide biosynthesis; sulfite from sulfate: step 1/3. With CysN forms the ATP sulfurylase (ATPS) that catalyzes the adenylation of sulfate producing adenosine 5'-phosphosulfate (APS) and diphosphate, the first enzymatic step in sulfur assimilation pathway. APS synthesis involves the formation of a high-energy phosphoric-sulfuric acid anhydride bond driven by GTP hydrolysis by CysN coupled to ATP hydrolysis by CysD. This chain is Sulfate adenylyltransferase subunit 2, found in Trichlorobacter lovleyi (strain ATCC BAA-1151 / DSM 17278 / SZ) (Geobacter lovleyi).